The chain runs to 62 residues: Glucagon (62 aa).

It belongs to the glucagon family.

It localises to the secreted. Its function is as follows. Promotes hydrolysis of glycogen and lipids, and raises the blood sugar level. The polypeptide is Glucagon (gcg) (Scyliorhinus canicula (Small-spotted catshark)).